A 491-amino-acid chain; its full sequence is MTETRLRFPPSPTGYLHIGGARTALYNWLYAKQHGGKLVLRIEDTDTERSTEESIKGIVDGLDWLGIDFDEGPYFQTDFASDHKSAAQKLLDSGQAYKCFCSKESLDEKREAALAAKKSLGYDGTCRNLTAEQIAEKEAAGAPYVLRFRVPECESVSYEDKIAGTIRVARSEIDDFVIVRSNGAPLYLLCNVVDDIRDRISHVIRGQDHMTNTIKQILLYEALDAPIPVFAHMPLTLDNKRAKISKRSHGEIVAVQFYRDHGFLPWALNNFLAMLGWSAGDDKEFYTKEELLKAFSLERINKSSSIFNYRKGDPKFFTDPKAISMNEHYIRNMDITELGKLVQKELEADGLWDTAYADEKADWYLATIDMIRARFHTLKDFATLGRAYFGEDYVVEEKPLKKNVLKFEGLKEWLPLLGERYASLDDFSAEETERVARELADELELKPGVIINGMRTAVTGQLAGPSMFDIVTTLGQERMVKRLREAGRLFA.

The 'HIGH' region motif lies at 10–20; the sequence is PSPTGYLHIGG. The 'KMSKS' region motif lies at 243–247; sequence KISKR. K246 contributes to the ATP binding site.

This sequence belongs to the class-I aminoacyl-tRNA synthetase family. Glutamate--tRNA ligase type 1 subfamily. As to quaternary structure, monomer.

The protein localises to the cytoplasm. It catalyses the reaction tRNA(Glu) + L-glutamate + ATP = L-glutamyl-tRNA(Glu) + AMP + diphosphate. Its function is as follows. Catalyzes the attachment of glutamate to tRNA(Glu) in a two-step reaction: glutamate is first activated by ATP to form Glu-AMP and then transferred to the acceptor end of tRNA(Glu). The protein is Glutamate--tRNA ligase of Desulfotalea psychrophila (strain LSv54 / DSM 12343).